Reading from the N-terminus, the 307-residue chain is Ribonuclease Z (307 aa).

Residues H63, H65, D67, H68, H143, D213, and H271 each coordinate Zn(2+). The active-site Proton acceptor is D67.

It belongs to the RNase Z family. Homodimer. It depends on Zn(2+) as a cofactor.

The catalysed reaction is Endonucleolytic cleavage of RNA, removing extra 3' nucleotides from tRNA precursor, generating 3' termini of tRNAs. A 3'-hydroxy group is left at the tRNA terminus and a 5'-phosphoryl group is left at the trailer molecule.. In terms of biological role, zinc phosphodiesterase, which displays some tRNA 3'-processing endonuclease activity. Probably involved in tRNA maturation, by removing a 3'-trailer from precursor tRNA. This Lactococcus lactis subsp. lactis (strain IL1403) (Streptococcus lactis) protein is Ribonuclease Z.